The sequence spans 277 residues: MHLRLISCFFIILNFMEYIGSQNASRGRRQRRMHPNVSQGCQGGCATCSDYNGCLSCKPRLFFVLERIGMKQIGVCLSSCPSGYYGTRYPDINKCTKCKVDCDTCFNKNFCTKCKSGFYLHLGKCLDSCPEGLEANNHTMECVSIVHCEASEWSPWSPCMKKGKTCGFKRGTETRVRDILQHPSAKGNLCPPTSETRTCIVQRKKCSKGERGKKGRERKRKKLNKEERKETSSSSDSKGLESSIETPDQQENKERQQQQKRRARDKQQKSVSVSTVH.

The N-terminal stretch at 1–21 is a signal peptide; the sequence is MHLRLISCFFIILNFMEYIGS. FU repeat units follow at residues 35–86 and 92–135; these read PNVS…GYYG and INKC…GLEA. Asn-36 carries N-linked (GlcNAc...) asparagine glycosylation. 11 disulfide bridges follow: Cys-41–Cys-48, Cys-45–Cys-54, Cys-57–Cys-76, Cys-80–Cys-95, Cys-98–Cys-105, Cys-102–Cys-111, Cys-114–Cys-125, Cys-129–Cys-142, Cys-148–Cys-190, Cys-159–Cys-166, and Cys-199–Cys-206. The TSP type-1 domain maps to 147 to 207; sequence HCEASEWSPW…TCIVQRKKCS (61 aa). The interval 210 to 277 is disordered; sequence ERGKKGRERK…QKSVSVSTVH (68 aa). Over residues 213–223 the composition is skewed to basic residues; sequence KKGRERKRKKL. Low complexity predominate over residues 232–245; that stretch reads SSSSDSKGLESSIE.

The protein belongs to the R-spondin family. Interacts with the extracellular domain of FZD8 and LRP6. It however does not form a ternary complex with FZD8 and LRP6. Interacts with WNT1. Binds heparin. Interacts with LGR4, LGR5 and LGR6. Highly expressed in endothelial cells.

Its subcellular location is the secreted. Its function is as follows. Activator of the canonical Wnt signaling pathway by acting as a ligand for LGR4-6 receptors, which acts as a key regulator of angiogenesis. Upon binding to LGR4-6 (LGR4, LGR5 or LGR6), LGR4-6 associate with phosphorylated LRP6 and frizzled receptors that are activated by extracellular Wnt receptors, triggering the canonical Wnt signaling pathway to increase expression of target genes. Also regulates the canonical Wnt/beta-catenin-dependent pathway and non-canonical Wnt signaling by acting as an inhibitor of ZNRF3, an important regulator of the Wnt signaling pathway. Acts as a ligand for frizzled FZD8 and LRP6. May negatively regulate the TGF-beta pathway. Acts as a key regulator of angiogenesis by controlling vascular stability and pruning: acts by activating the non-canonical Wnt signaling pathway in endothelial cells. Can also amplify Wnt signaling pathway independently of LGR4-6 receptors, possibly by acting as a direct antagonistic ligand to RNF43 and ZNRF3. The polypeptide is R-spondin-3 (Rspo3) (Mus musculus (Mouse)).